Here is a 457-residue protein sequence, read N- to C-terminus: Multidrug resistance protein MdtK (457 aa).

A run of 12 helical transmembrane segments spans residues 11-31 (LLAL…MGFV), 53-73 (IWLP…PVIA), 93-113 (WLAG…GYII), 127-147 (AVGY…FQVA), 160-180 (GMVM…IFIY), 189-209 (GGVG…LAMV), 243-263 (LPIA…ALLV), 276-296 (IALN…AAVT), 314-334 (AART…IFTV), 350-370 (VVTL…SDSI), 387-407 (IFYI…YILA), and 418-438 (PAGF…MMML).

This sequence belongs to the multi antimicrobial extrusion (MATE) (TC 2.A.66.1) family. MdtK subfamily.

The protein localises to the cell inner membrane. Multidrug efflux pump that functions probably as a Na(+)/drug antiporter. The polypeptide is Multidrug resistance protein MdtK (Escherichia coli O139:H28 (strain E24377A / ETEC)).